Reading from the N-terminus, the 298-residue chain is Deoxyuridine 5'-triphosphate nucleotidohydrolase (298 aa).

A substrate-binding site is contributed by 180-182; sequence RSG.

It belongs to the dUTPase family. Requires Mg(2+) as cofactor.

The enzyme catalyses dUTP + H2O = dUMP + diphosphate + H(+). Involved in nucleotide metabolism: produces dUMP, the immediate precursor of thymidine nucleotides and decreases the intracellular concentration of dUTP to avoid uracil incorporation into viral DNA. The polypeptide is Deoxyuridine 5'-triphosphate nucleotidohydrolase (Alcelaphine herpesvirus 1 (strain C500) (AlHV-1)).